We begin with the raw amino-acid sequence, 452 residues long: tRNA modification GTPase MnmE (452 aa).

(6S)-5-formyl-5,6,7,8-tetrahydrofolate contacts are provided by Arg21, Glu78, and Lys118. Positions 214–375 constitute a TrmE-type G domain; it reads GMKVVIAGRP…LREHLKQSMG (162 aa). Asn224 contributes to the K(+) binding site. Residues 224 to 229, 243 to 249, and 268 to 271 each bind GTP; these read NAGKSS, TDIAGTT, and DTAG. Ser228 provides a ligand contact to Mg(2+). Positions 243, 245, and 248 each coordinate K(+). Thr249 is a Mg(2+) binding site. (6S)-5-formyl-5,6,7,8-tetrahydrofolate is bound at residue Lys452.

The protein belongs to the TRAFAC class TrmE-Era-EngA-EngB-Septin-like GTPase superfamily. TrmE GTPase family. As to quaternary structure, homodimer. Heterotetramer of two MnmE and two MnmG subunits. The cofactor is K(+).

The protein localises to the cytoplasm. In terms of biological role, exhibits a very high intrinsic GTPase hydrolysis rate. Involved in the addition of a carboxymethylaminomethyl (cmnm) group at the wobble position (U34) of certain tRNAs, forming tRNA-cmnm(5)s(2)U34. In Actinobacillus succinogenes (strain ATCC 55618 / DSM 22257 / CCUG 43843 / 130Z), this protein is tRNA modification GTPase MnmE.